We begin with the raw amino-acid sequence, 126 residues long: uncharacterized protein (126 aa).

Residues 1 to 9 lie on the Extracellular side of the membrane; that stretch reads MCTYIITQS. The helical transmembrane segment at 10 to 30 threads the bilayer; sequence FFFLPCLSFLFFKLVGFFDSV. Over 31–73 the chain is Cytoplasmic; the sequence is FTAGKSLRIMFELPIFDKLTSCFAAIDCSATSLDIPFAEEELF. Residues 74-94 form a helical membrane-spanning segment; sequence LMLVSEPVLIPFLFVFEFMLI. Topologically, residues 95 to 126 are extracellular; that stretch reads CKPCGSRSRFGFPVKNVSDFEETLEFDPTLLV.

The protein resides in the membrane. This is an uncharacterized protein from Saccharomyces cerevisiae (strain ATCC 204508 / S288c) (Baker's yeast).